A 177-amino-acid chain; its full sequence is Protein GrpE (177 aa).

Belongs to the GrpE family. In terms of assembly, homodimer.

It localises to the cytoplasm. Participates actively in the response to hyperosmotic and heat shock by preventing the aggregation of stress-denatured proteins, in association with DnaK and GrpE. It is the nucleotide exchange factor for DnaK and may function as a thermosensor. Unfolded proteins bind initially to DnaJ; upon interaction with the DnaJ-bound protein, DnaK hydrolyzes its bound ATP, resulting in the formation of a stable complex. GrpE releases ADP from DnaK; ATP binding to DnaK triggers the release of the substrate protein, thus completing the reaction cycle. Several rounds of ATP-dependent interactions between DnaJ, DnaK and GrpE are required for fully efficient folding. The chain is Protein GrpE from Thermus thermophilus (strain ATCC BAA-163 / DSM 7039 / HB27).